A 363-amino-acid chain; its full sequence is GDSL esterase/lipase At1g29670 (363 aa).

Positions methionine 1–alanine 24 are cleaved as a signal peptide. Catalysis depends on serine 39, which acts as the Nucleophile. Residues aspartate 327 and histidine 330 contribute to the active site.

The protein belongs to the 'GDSL' lipolytic enzyme family.

The protein resides in the secreted. The sequence is that of GDSL esterase/lipase At1g29670 from Arabidopsis thaliana (Mouse-ear cress).